The primary structure comprises 217 residues: Large ribosomal subunit protein uL3 (217 aa).

Residues 127–162 (GFSRGPMSHGSKNHRAPGSTGAGTTPGRIYPGKRMA) form a disordered region. Positions 142-153 (APGSTGAGTTPG) are enriched in low complexity.

This sequence belongs to the universal ribosomal protein uL3 family. In terms of assembly, part of the 50S ribosomal subunit. Forms a cluster with proteins L14 and L19.

Its function is as follows. One of the primary rRNA binding proteins, it binds directly near the 3'-end of the 23S rRNA, where it nucleates assembly of the 50S subunit. The protein is Large ribosomal subunit protein uL3 of Prochlorococcus marinus (strain AS9601).